Here is an 843-residue protein sequence, read N- to C-terminus: Glycogen phosphorylase, brain form (843 aa).

Alanine 2 carries the N-acetylalanine modification. Residue serine 15 is modified to Phosphoserine; by PHK; in form phosphorylase A. 3 residues coordinate AMP: aspartate 43, tyrosine 197, and arginine 310. At tyrosine 197 the chain carries Phosphotyrosine. The residue at position 473 (tyrosine 473) is a Phosphotyrosine. Serine 524 carries the phosphoserine modification. Lysine 569 is a pyridoxal 5'-phosphate binding site. The tract at residues 677–678 (TG) is pyridoxal 5'-phosphate. At lysine 681 the chain carries N6-(pyridoxal phosphate)lysine.

The protein belongs to the glycogen phosphorylase family. As to quaternary structure, homodimer. Dimers associate into a tetramer to form the enzymatically active phosphorylase A. Pyridoxal 5'-phosphate serves as cofactor. In terms of processing, phosphorylation of Ser-15 converts phosphorylase B (unphosphorylated) to phosphorylase A.

The catalysed reaction is [(1-&gt;4)-alpha-D-glucosyl](n) + phosphate = [(1-&gt;4)-alpha-D-glucosyl](n-1) + alpha-D-glucose 1-phosphate. With respect to regulation, activity of phosphorylase is controlled both by allosteric means (through the non-covalent binding of metabolites) and by covalent modification. Thus AMP allosterically activates, whereas ATP, ADP, and glucose-6-phosphate allosterically inhibit, phosphorylase B. Its function is as follows. Glycogen phosphorylase that regulates glycogen mobilization. Phosphorylase is an important allosteric enzyme in carbohydrate metabolism. Enzymes from different sources differ in their regulatory mechanisms and in their natural substrates. However, all known phosphorylases share catalytic and structural properties. In Mus musculus (Mouse), this protein is Glycogen phosphorylase, brain form (Pygb).